Here is a 440-residue protein sequence, read N- to C-terminus: Long-chain alkane monooxygenase (440 aa).

FMN contacts are provided by residues aspartate 58, 137–138 (SH), tyrosine 158, and 227–230 (AGMS).

This sequence belongs to the NtaA/SnaA/DszA monooxygenase family. As to quaternary structure, homodimer.

The protein localises to the secreted. It carries out the reaction a long-chain alkane + FMNH2 + O2 = a long chain fatty alcohol + FMN + H2O + H(+). Functionally, involved in the degradation of long-chain alkanes. Converts alkanes ranging from C(15) to C(36) into their corresponding primary alcohols. This chain is Long-chain alkane monooxygenase, found in Geobacillus thermodenitrificans (strain NG80-2).